The primary structure comprises 323 residues: tRNA-cytidine(32) 2-sulfurtransferase (323 aa).

A PP-loop motif motif is present at residues 49–54; the sequence is SGGKDS. Cysteine 124, cysteine 127, and cysteine 215 together coordinate [4Fe-4S] cluster.

This sequence belongs to the TtcA family. As to quaternary structure, homodimer. Requires Mg(2+) as cofactor. [4Fe-4S] cluster is required as a cofactor.

It is found in the cytoplasm. It catalyses the reaction cytidine(32) in tRNA + S-sulfanyl-L-cysteinyl-[cysteine desulfurase] + AH2 + ATP = 2-thiocytidine(32) in tRNA + L-cysteinyl-[cysteine desulfurase] + A + AMP + diphosphate + H(+). It participates in tRNA modification. Catalyzes the ATP-dependent 2-thiolation of cytidine in position 32 of tRNA, to form 2-thiocytidine (s(2)C32). The sulfur atoms are provided by the cysteine/cysteine desulfurase (IscS) system. The sequence is that of tRNA-cytidine(32) 2-sulfurtransferase from Shewanella denitrificans (strain OS217 / ATCC BAA-1090 / DSM 15013).